We begin with the raw amino-acid sequence, 1131 residues long: Homeobox-DDT domain protein RLT3 (1131 aa).

A DNA-binding region (homeobox; TALE-type) is located at residues 2 to 56 (KRKSPLQVQALEGFYLEQMYPTPKEMEDLGKSLGLTLKEVRGWFKRRRSRGKGVK). Positions 239–251 (LQKRSTEKKRRSI) are enriched in basic residues. Residues 239–264 (LQKRSTEKKRRSIHREAELNKDETQR) are disordered. Residues 252–264 (HREAELNKDETQR) show a composition bias toward basic and acidic residues. In terms of domain architecture, DDT spans 365 to 424 (PESVKKLFKVVHFLYTYSVTLDIGPFTLDEFTRAFHDKDSLLLGKIHLSLLKLLLLDVET). The interval 579 to 609 (EDPDKSQSDSDDSGSVDDESDDCSISSGDEI) is disordered. Acidic residues predominate over residues 587 to 600 (DSDDSGSVDDESDD).

The protein resides in the nucleus. Functionally, transcriptional regulator required for the maintenance of the plant vegetative phase. May prevent the early activation of the vegetative-to-reproductive transition by regulating key genes that contribute to flower timing. In Arabidopsis thaliana (Mouse-ear cress), this protein is Homeobox-DDT domain protein RLT3.